Here is a 155-residue protein sequence, read N- to C-terminus: Small ribosomal subunit protein uS7 (155 aa).

It belongs to the universal ribosomal protein uS7 family. As to quaternary structure, part of the 30S ribosomal subunit. Contacts proteins S9 and S11.

Its function is as follows. One of the primary rRNA binding proteins, it binds directly to 16S rRNA where it nucleates assembly of the head domain of the 30S subunit. Is located at the subunit interface close to the decoding center, probably blocks exit of the E-site tRNA. The polypeptide is Small ribosomal subunit protein uS7 (Corynebacterium diphtheriae (strain ATCC 700971 / NCTC 13129 / Biotype gravis)).